Here is a 1476-residue protein sequence, read N- to C-terminus: ABC-type transporter frbG (1476 aa).

Helical transmembrane passes span Leu-26–Leu-46, Leu-64–Ile-84, Ser-97–Leu-117, Ser-122–Ile-142, and Thr-146–Leu-166. Asn-244 carries N-linked (GlcNAc...) asparagine glycosylation. The next 4 helical transmembrane spans lie at Phe-266 to Leu-286, Ala-302 to Ile-322, Leu-380 to Leu-400, and Ile-409 to Ala-429. The ABC transmembrane type-1 1 domain occupies Leu-274–Leu-553. N-linked (GlcNAc...) asparagine glycosylation is present at Asn-464. 2 consecutive transmembrane segments (helical) span residues Cys-487 to Phe-507 and Ile-533 to Leu-553. Residues Ile-619–Ser-845 form the ABC transporter 1 domain. Residue Gly-652–Ser-659 coordinates ATP. Asn-694, Asn-776, Asn-805, and Asn-842 each carry an N-linked (GlcNAc...) asparagine glycan. The next 5 membrane-spanning stretches (helical) occupy residues Ala-898 to Val-918, Tyr-936 to Ser-956, Leu-1017 to Val-1037, Leu-1121 to Val-1141, and Gly-1151 to Ile-1171. The ABC transmembrane type-1 2 domain occupies Ala-898–Thr-1179. The ABC transporter 2 domain maps to Ile-1216–Pro-1447. Asn-1235 carries N-linked (GlcNAc...) asparagine glycosylation. Gly-1250–Ser-1257 contacts ATP.

The protein belongs to the ABC transporter superfamily. ABCC family. Conjugate transporter (TC 3.A.1.208) subfamily.

It localises to the cell membrane. Functionally, ABC-type transporter; part of the gene cluster that mediates the biosynthesis of the antifungal antibiotic FR901469, an inhibitor of beta-1,3-glucansynthase, exerting antifungal activity against the pathogenes Candida albicans and Aspergillus fumigatus. FR901469 is a cyclic depsipeptide containing 12 amino acid residues and a fatty acid chain. Probably involved in the secretion of FR901469. In Dothideomycetidae sp. (strain 11243) (Fungal sp. (strain No.11243)), this protein is ABC-type transporter frbG.